A 972-amino-acid polypeptide reads, in one-letter code: Mast/stem cell growth factor receptor Kit (972 aa).

The N-terminal stretch at 1-25 (MRGARGAWDFLCVLLLLLRVQTGSS) is a signal peptide. The Extracellular segment spans residues 26-520 (QPSVSPEEAS…QIQPHTLFTP (495 aa)). Ig-like C2-type domains follow at residues 27-112 (PSVS…VFVR), 121-205 (DRSL…LKVR), 212-308 (PVVS…LEVV), 317-410 (PMIN…VYVN), and 413-507 (PEIL…FNFA). The cysteines at positions 58 and 97 are disulfide-linked. N-linked (GlcNAc...) asparagine glycans are attached at residues Asn-130 and Asn-145. Disulfide bonds link Cys-136–Cys-186, Cys-151–Cys-183, and Cys-233–Cys-290. 7 N-linked (GlcNAc...) asparagine glycosylation sites follow: Asn-283, Asn-300, Asn-320, Asn-352, Asn-367, Asn-463, and Asn-486. A disulfide bridge connects residues Cys-428 and Cys-491. A helical transmembrane segment spans residues 521 to 541 (LLIGFVVVAGMMCIIVMILTY). Residues 542–972 (KYLQKPMYEV…SQPLLVRDDV (431 aa)) are Cytoplasmic-facing. Phosphotyrosine is present on residues Tyr-543 and Tyr-549. Position 564 (Tyr-564) interacts with Mg(2+). Phosphotyrosine; by autocatalysis occurs at positions 564 and 566. Residues 564–566 (YVY) form an important for interaction with phosphotyrosine-binding proteins region. In terms of domain architecture, Protein kinase spans 585 to 933 (LSFGKTLGAG…ISESTNHIYS (349 aa)). ATP is bound by residues 592–599 (GAGAFGKV), Lys-619, and 667–673 (EYCCYGD). Phosphotyrosine; by autocatalysis occurs at positions 699 and 717. A Phosphotyrosine modification is found at Tyr-726. 2 positions are modified to phosphoserine; by PKC/PRKCA: Ser-737 and Ser-742. Residue Asp-788 is the Proton acceptor of the active site. Arg-792 lines the ATP pocket. Positions 793 and 806 each coordinate Mg(2+). The residue at position 817 (Ser-817) is a Phosphoserine. Residue Tyr-819 is modified to Phosphotyrosine; by autocatalysis. Ser-887 is subject to Phosphoserine. Tyr-896 is subject to Phosphotyrosine. Residue Tyr-932 is modified to Phosphotyrosine; by autocatalysis. A Phosphoserine modification is found at Ser-955.

The protein belongs to the protein kinase superfamily. Tyr protein kinase family. CSF-1/PDGF receptor subfamily. Monomer in the absence of bound KITLG/SCF. Homodimer in the presence of bound KITLG/SCF, forming a heterotetramer with two KITLG/SCF molecules. Interacts (via phosphorylated tyrosine residues) with the adapter proteins GRB2 and GRB7 (via SH2 domain), and SH2B2/APS. Interacts (via C-terminus) with MPDZ (via the tenth PDZ domain). Interacts (via phosphorylated tyrosine residues) with PIK3R1 and PIK3CD. Interacts (via phosphorylated tyrosine) with CRK (isoform Crk-II), FYN, SHC1 and MATK/CHK (via SH2 domain). Interacts with LYN and FES/FPS. Interacts (via phosphorylated tyrosine residues) with the protein phosphatases PTPN6/SHP-1 (via SH2 domain), PTPN11/SHP-2 (via SH2 domain) and PTPRU. Interacts with PLCG1. Interacts with DOK1 and TEC. Interacts with IL1RAP (independent of stimulation with KITLG/SCF). A mast cell-specific KITLG/SCF-induced interleukin-33 signaling complex contains IL1RL1, IL1RAP, KIT and MYD88. Post-translationally, ubiquitinated by SOCS6. KIT is rapidly ubiquitinated after autophosphorylation induced by KITLG/SCF binding, leading to internalization and degradation. Autophosphorylated on tyrosine residues. KITLG/SCF binding promotes autophosphorylation. Phosphorylated tyrosine residues are important for interaction with specific binding partners.

Its subcellular location is the cell membrane. It carries out the reaction L-tyrosyl-[protein] + ATP = O-phospho-L-tyrosyl-[protein] + ADP + H(+). Present in an inactive conformation in the absence of bound ligand. KITLG/SCF binding leads to dimerization and activation by autophosphorylation on tyrosine residues. Activity is down-regulated by PRKCA-mediated phosphorylation on serine residues. Functionally, tyrosine-protein kinase that acts as a cell-surface receptor for the cytokine KITLG/SCF and plays an essential role in the regulation of cell survival and proliferation, hematopoiesis, stem cell maintenance, gametogenesis, mast cell development, migration and function, and in melanogenesis. In response to KITLG/SCF binding, KIT can activate several signaling pathways. Phosphorylates PIK3R1, PLCG1, SH2B2/APS and CBL. Activates the AKT1 signaling pathway by phosphorylation of PIK3R1, the regulatory subunit of phosphatidylinositol 3-kinase. Activated KIT also transmits signals via GRB2 and activation of RAS, RAF1 and the MAP kinases MAPK1/ERK2 and/or MAPK3/ERK1. Promotes activation of STAT family members STAT1, STAT3, STAT5A and STAT5B. Activation of PLCG1 leads to the production of the cellular signaling molecules diacylglycerol and inositol 1,4,5-trisphosphate. KIT signaling is modulated by protein phosphatases, and by rapid internalization and degradation of the receptor. Activated KIT promotes phosphorylation of the protein phosphatases PTPN6/SHP-1 and PTPRU, and of the transcription factors STAT1, STAT3, STAT5A and STAT5B. Promotes phosphorylation of PIK3R1, CBL, CRK (isoform Crk-II), LYN, MAPK1/ERK2 and/or MAPK3/ERK1, PLCG1, SRC and SHC1. This Callithrix jacchus (White-tufted-ear marmoset) protein is Mast/stem cell growth factor receptor Kit (KIT).